We begin with the raw amino-acid sequence, 389 residues long: Chorismate synthase (389 aa).

NADP(+)-binding residues include R40 and R46. Residues 131 to 133 (RSS), 252 to 253 (NA), G297, 312 to 316 (KPIPT), and R338 each bind FMN.

This sequence belongs to the chorismate synthase family. In terms of assembly, homotetramer. The cofactor is FMNH2.

The catalysed reaction is 5-O-(1-carboxyvinyl)-3-phosphoshikimate = chorismate + phosphate. The protein operates within metabolic intermediate biosynthesis; chorismate biosynthesis; chorismate from D-erythrose 4-phosphate and phosphoenolpyruvate: step 7/7. In terms of biological role, catalyzes the anti-1,4-elimination of the C-3 phosphate and the C-6 proR hydrogen from 5-enolpyruvylshikimate-3-phosphate (EPSP) to yield chorismate, which is the branch point compound that serves as the starting substrate for the three terminal pathways of aromatic amino acid biosynthesis. This reaction introduces a second double bond into the aromatic ring system. This chain is Chorismate synthase, found in Lactiplantibacillus plantarum (strain ATCC BAA-793 / NCIMB 8826 / WCFS1) (Lactobacillus plantarum).